The sequence spans 203 residues: Protein GrpE 2 (203 aa).

The segment covering 1–12 has biased composition (basic and acidic residues); it reads MPTRPQEPDRAA. The segment at 1–64 is disordered; it reads MPTRPQEPDR…APAEDEYTTA (64 aa). The span at 45–56 shows a compositional bias: low complexity; it reads GEPGPDAAGPAP.

This sequence belongs to the GrpE family. In terms of assembly, homodimer.

The protein localises to the cytoplasm. Participates actively in the response to hyperosmotic and heat shock by preventing the aggregation of stress-denatured proteins, in association with DnaK and GrpE. It is the nucleotide exchange factor for DnaK and may function as a thermosensor. Unfolded proteins bind initially to DnaJ; upon interaction with the DnaJ-bound protein, DnaK hydrolyzes its bound ATP, resulting in the formation of a stable complex. GrpE releases ADP from DnaK; ATP binding to DnaK triggers the release of the substrate protein, thus completing the reaction cycle. Several rounds of ATP-dependent interactions between DnaJ, DnaK and GrpE are required for fully efficient folding. The polypeptide is Protein GrpE 2 (Streptomyces avermitilis (strain ATCC 31267 / DSM 46492 / JCM 5070 / NBRC 14893 / NCIMB 12804 / NRRL 8165 / MA-4680)).